Here is a 431-residue protein sequence, read N- to C-terminus: Putative helicase 055L (431 aa).

The 150-residue stretch at 73–222 folds into the Helicase ATP-binding domain; it reads WGHVTSKGYC…ALGAFFGRED (150 aa). 86-93 contributes to the ATP binding site; the sequence is CPPGFGKT. The DEAH box signature appears at 175–178; that stretch reads DEAH. Residues 403-431 form a disordered region; that stretch reads KCDASRPSQSTPTPTGSSQPAPRTRRPQR. Low complexity predominate over residues 407 to 424; the sequence is SRPSQSTPTPTGSSQPAP.

The sequence is that of Putative helicase 055L from Frog virus 3 (isolate Goorha) (FV-3).